The chain runs to 503 residues: E3 ubiquitin-protein ligase IE61 (503 aa).

The segment at 19-58 (CAICMSAISGLGKTLPCLHDFCFVCIQTWTSTSAQCPLCR) adopts an RING-type zinc-finger fold. Disordered stretches follow at residues 175-194 (AVITPTTSTGPRLHLSPSSR), 367-418 (SGPI…LFVD), and 445-503 (AALP…VRRK). Residues 375–388 (GGSTSQDTSVSNIH) show a composition bias toward polar residues. The span at 389–403 (RSPPGGSSTQPSSGR) shows a compositional bias: low complexity. A compositionally biased stretch (basic residues) spans 404–414 (RPGRPKGVKRR). Residues 471–480 (PSTSGSSPSP) show a composition bias toward low complexity.

Interacts with host BTRC; this interaction seems to inactivate SCF-mediated protein degradation in general.

The catalysed reaction is S-ubiquitinyl-[E2 ubiquitin-conjugating enzyme]-L-cysteine + [acceptor protein]-L-lysine = [E2 ubiquitin-conjugating enzyme]-L-cysteine + N(6)-ubiquitinyl-[acceptor protein]-L-lysine.. Its function is as follows. RING-finger E3 ubiquitin ligase that degrades host SP100, one of the major components of ND10 nuclear bodies, thereby disrupting the organization of these bodies. Also plays a role in the inhibition of host NF-kappa-B pathway by blocking the SCF(BTRC)-mediated addition of ubiquitin chains to host IkappaBalpha/NFKBIA, thereby interfering with its degradation. The chain is E3 ubiquitin-protein ligase IE61 from Cercopithecine herpesvirus 9 (strain DHV) (CeHV-9).